Here is a 267-residue protein sequence, read N- to C-terminus: Proenkephalin-A (267 aa).

A signal peptide spans 1 to 24 (MARFLTLCTWLLLLGPGLLATVRA). 3 cysteine pairs are disulfide-bonded: Cys26-Cys48, Cys30-Cys52, and Cys33-Cys65. A compositionally biased stretch (basic and acidic residues) spans 163–175 (TGDNRERSHHQDG). A disordered region spans residues 163 to 182 (TGDNRERSHHQDGSDNEEEV). 2 consecutive propeptides follow at residues 196 to 207 (SPQLEDEAKELQ) and 217 to 227 (VGRPEWWMDYQ). Ser251 carries the post-translational modification Phosphoserine.

The protein belongs to the opioid neuropeptide precursor family. Proenkephalin-A is cleaved by CTSL to generate Met-enkephalin. In terms of processing, processed and degraded by ACE. Post-translationally, probably cleaved by ACE. Processed by ACE to generate Met-enkephalin in the nucleus accumbens of the brain. In terms of processing, the N-terminal domain contains 6 conserved cysteines thought to be involved in disulfide bonding and/or processing.

The protein resides in the cytoplasmic vesicle. It is found in the secretory vesicle. Its subcellular location is the chromaffin granule lumen. It localises to the secreted. Neuropeptide that competes with and mimic the effects of opiate drugs. They play a role in a number of physiologic functions, including pain perception and responses to stress. In terms of biological role, met-enkephalin-Arg-Phe neuropeptide acts as a strong ligand of Mu-type opioid receptor OPRM1. Met-enkephalin-Arg-Phe-binding to OPRM1 in the nucleus accumbens of the brain increases activation of OPRM1, leading to long-term synaptic depression of glutamate release. Its function is as follows. Increases glutamate release in the striatum and decreases GABA concentration in the striatum. Functionally, increases glutamate release in the striatum. The sequence is that of Proenkephalin-A from Homo sapiens (Human).